Reading from the N-terminus, the 201-residue chain is MAGRESDAVSLAGVVLAGGESRRMGRDKATLVLPGGSTTMVEHVLGIVGQRCEPVFVMAAQGQPLPPLQVPVLRDELRGLGPLPATGRGLRAAAEAGARFAFVCAVDMPGLTVDLIDDLVRSAIETDAEVVLPWDGRSHYLAAIYRTDLAERVDALVAAGERKMSALADSSDTQRIVMSDSAPLANVNTAADLPAPVRPGH.

GTP is bound by residues 16 to 18, Lys-28, Asp-75, and Asp-107; that span reads LAG. Residue Asp-107 participates in Mg(2+) binding.

This sequence belongs to the MobA family. Mg(2+) is required as a cofactor.

The protein resides in the cytoplasm. It catalyses the reaction Mo-molybdopterin + GTP + H(+) = Mo-molybdopterin guanine dinucleotide + diphosphate. Transfers a GMP moiety from GTP to Mo-molybdopterin (Mo-MPT) cofactor (Moco or molybdenum cofactor) to form Mo-molybdopterin guanine dinucleotide (Mo-MGD) cofactor. This is Probable molybdenum cofactor guanylyltransferase from Mycobacterium marinum (strain ATCC BAA-535 / M).